A 565-amino-acid polypeptide reads, in one-letter code: Glucose-6-phosphate isomerase (565 aa).

Glu-373 (proton donor) is an active-site residue. Active-site residues include His-404 and Lys-530.

The protein belongs to the GPI family.

The protein resides in the cytoplasm. It catalyses the reaction alpha-D-glucose 6-phosphate = beta-D-fructose 6-phosphate. It functions in the pathway carbohydrate biosynthesis; gluconeogenesis. The protein operates within carbohydrate degradation; glycolysis; D-glyceraldehyde 3-phosphate and glycerone phosphate from D-glucose: step 2/4. Catalyzes the reversible isomerization of glucose-6-phosphate to fructose-6-phosphate. This is Glucose-6-phosphate isomerase from Corynebacterium jeikeium (strain K411).